The following is a 303-amino-acid chain: uncharacterized protein (303 aa).

This is an uncharacterized protein from Haemophilus influenzae (strain ATCC 51907 / DSM 11121 / KW20 / Rd).